Reading from the N-terminus, the 218-residue chain is Adenylate kinase (218 aa).

10–15 (GAGKGT) serves as a coordination point for ATP. Residues 30-59 (STGDMLRNAAKEGKPLGLEAKKIMDAGQLV) are NMP. Residues T31, R36, 57 to 59 (QLV), 85 to 88 (GFPR), and Q92 each bind AMP. The interval 122-159 (GRRVHLASGRSYHVMFNPPKQEGLDDATGEPLVQRADD) is LID. Residues R123 and 132-133 (SY) contribute to the ATP site. R156 and R167 together coordinate AMP. G203 lines the ATP pocket.

It belongs to the adenylate kinase family. As to quaternary structure, monomer.

The protein localises to the cytoplasm. It carries out the reaction AMP + ATP = 2 ADP. It functions in the pathway purine metabolism; AMP biosynthesis via salvage pathway; AMP from ADP: step 1/1. Functionally, catalyzes the reversible transfer of the terminal phosphate group between ATP and AMP. Plays an important role in cellular energy homeostasis and in adenine nucleotide metabolism. In Chlorobium chlorochromatii (strain CaD3), this protein is Adenylate kinase.